The chain runs to 70 residues: Metallothionein-like protein 1 (70 aa).

The protein belongs to the metallothionein superfamily. Type 15 family.

Its function is as follows. Metallothioneins have a high content of cysteine residues that bind various heavy metals. The polypeptide is Metallothionein-like protein 1 (MT1) (Festuca rubra (Red fescue)).